Reading from the N-terminus, the 243-residue chain is Ribosomal RNA small subunit methyltransferase G (243 aa).

S-adenosyl-L-methionine is bound by residues Gly-79, Phe-84, 130-131 (AE), and Arg-150. The segment at 222 to 243 (KPTPNKYPRKPGIPNKQPLGGA) is disordered.

It belongs to the methyltransferase superfamily. RNA methyltransferase RsmG family.

It is found in the cytoplasm. Functionally, specifically methylates the N7 position of a guanine in 16S rRNA. The chain is Ribosomal RNA small subunit methyltransferase G from Lacticaseibacillus paracasei (strain ATCC 334 / BCRC 17002 / CCUG 31169 / CIP 107868 / KCTC 3260 / NRRL B-441) (Lactobacillus paracasei).